The chain runs to 1291 residues: Tat-binding homolog 7 (1291 aa).

A disordered region spans residues 1–345; it reads MPRSDGFSPR…HNRGERERGR (345 aa). A compositionally biased stretch (basic and acidic residues) spans 64–82; it reads RYYEEEYHEAISSEEDERR. Positions 88–99 are enriched in polar residues; it reads SSNSMTYRQQVM. The span at 226–257 shows a compositional bias: acidic residues; the sequence is EEEEEGAEEDEQSGEKDPEEEEDDSSNAESSE. Residues 298–311 show a composition bias toward basic residues; sequence NRHHRNRNGSRRRR. 432-439 contacts ATP; that stretch reads GPPGTGKT. Residues 914–1022 form the Bromo domain; it reads ALQRQMRLFF…DAIDDLIECE (109 aa). Positions 1110-1194 are disordered; it reads KSEEGTSTST…MKDASKDSTP (85 aa). The span at 1128–1142 shows a compositional bias: basic residues; the sequence is NKKKLLKKKKGQKKS. Over residues 1148 to 1164 the composition is skewed to acidic residues; the sequence is EEHDEDSTVEDAGEDTI. Positions 1168–1190 are enriched in basic and acidic residues; the sequence is LEIKKNQETPNSEHDIEMKDASK.

This sequence belongs to the AAA ATPase family.

Its function is as follows. Thought to form a complex that enhances transcription from repetitive DNA sequences by modulating chromatin structure. This is Tat-binding homolog 7 (lex-1) from Caenorhabditis elegans.